The following is a 710-amino-acid chain: Polyribonucleotide nucleotidyltransferase (710 aa).

The Mg(2+) site is built by aspartate 491 and aspartate 497. The KH domain maps to 558 to 618; it reads PRIYKIQVKP…SAAQKAIEII (61 aa). An S1 motif domain is found at 628–696; the sequence is GRIYMGKVTR…ELGRVRLSRK (69 aa).

It belongs to the polyribonucleotide nucleotidyltransferase family. Requires Mg(2+) as cofactor.

Its subcellular location is the cytoplasm. The enzyme catalyses RNA(n+1) + phosphate = RNA(n) + a ribonucleoside 5'-diphosphate. Its function is as follows. Involved in mRNA degradation. Catalyzes the phosphorolysis of single-stranded polyribonucleotides processively in the 3'- to 5'-direction. The sequence is that of Polyribonucleotide nucleotidyltransferase from Thermodesulfovibrio yellowstonii (strain ATCC 51303 / DSM 11347 / YP87).